The chain runs to 359 residues: Membrane-bound lytic murein transglycosylase C (359 aa).

Residues Met-1–Ser-16 form the signal peptide. Cys-17 carries N-palmitoyl cysteine lipidation. Cys-17 is lipidated: S-diacylglycerol cysteine.

The protein belongs to the transglycosylase Slt family.

The protein resides in the cell outer membrane. The enzyme catalyses Exolytic cleavage of the (1-&gt;4)-beta-glycosidic linkage between N-acetylmuramic acid (MurNAc) and N-acetylglucosamine (GlcNAc) residues in peptidoglycan, from either the reducing or the non-reducing ends of the peptidoglycan chains, with concomitant formation of a 1,6-anhydrobond in the MurNAc residue.. Its function is as follows. Murein-degrading enzyme. May play a role in recycling of muropeptides during cell elongation and/or cell division. The polypeptide is Membrane-bound lytic murein transglycosylase C (Escherichia coli (strain SE11)).